Reading from the N-terminus, the 146-residue chain is Copper transporter 5 (146 aa).

A helical transmembrane segment spans residues 24-44; it reads WLSYILTLIACFVFSAFYQYL. Residues 55–74 form a disordered region; that stretch reads SSSRRAPPPPRSSSGVSAPL. The helical transmembrane segment at 101 to 121 threads the bilayer; it reads LLMLAAMSFNGGVFIAIVVGL.

The protein belongs to the copper transporter (Ctr) (TC 1.A.56) family. SLC31A subfamily. In terms of tissue distribution, highly expressed in leaves and stems and at lower levels in roots and flowers.

The protein localises to the membrane. In terms of biological role, involved in the transport of copper. This is Copper transporter 5 (COPT5) from Arabidopsis thaliana (Mouse-ear cress).